Reading from the N-terminus, the 218-residue chain is THAP domain-containing protein 3 (218 aa).

A THAP-type zinc finger spans residues 1–82 (MPKSCAARQC…LKHNAVPTVF (82 aa)). Disordered regions lie at residues 97-120 (GGDS…PEGP) and 133-154 (ATEA…PGQP). Position 100 is a phosphoserine (Ser-100). The HCFC1-binding motif (HBM) signature appears at 156–159 (DHSY).

As to quaternary structure, component of a THAP1/THAP3-HCFC1-OGT complex that contains at least, either THAP1 or THAP3, HCFC1 and OGT. Interacts directly with OGT and HCFC1 (via its HBM). Highest levels in heart, liver and kidney. Lower levels in brain and lung.

In terms of biological role, component of a THAP1/THAP3-HCFC1-OGT complex that is required for the regulation of the transcriptional activity of RRM1. The polypeptide is THAP domain-containing protein 3 (Thap3) (Mus musculus (Mouse)).